The chain runs to 1020 residues: Mediator of RNA polymerase II transcription subunit 16 (1020 aa).

It belongs to the Mediator complex subunit 16 family. In terms of assembly, component of the Mediator complex.

It is found in the nucleus. In terms of biological role, component of the Mediator complex, a coactivator involved in the regulated transcription of nearly all RNA polymerase II-dependent genes. Mediator functions as a bridge to convey information from gene-specific regulatory proteins to the basal RNA polymerase II transcription machinery. Mediator is recruited to promoters by direct interactions with regulatory proteins and serves as a scaffold for the assembly of a functional preinitiation complex with RNA polymerase II and the general transcription factors. In Scheffersomyces stipitis (strain ATCC 58785 / CBS 6054 / NBRC 10063 / NRRL Y-11545) (Yeast), this protein is Mediator of RNA polymerase II transcription subunit 16 (SIN4).